The sequence spans 1510 residues: ABC transporter C family MRP4 (1510 aa).

12 consecutive transmembrane segments (helical) span residues Glu-12 to Leu-32, Pro-55 to Trp-75, Ala-78 to Val-98, Ala-109 to Gln-129, Phe-138 to Tyr-158, Met-177 to Gly-197, Thr-319 to Val-339, Leu-342 to Ala-362, Trp-373 to Tyr-393, Ala-427 to Leu-447, Ile-453 to Ala-473, and Phe-540 to Leu-560. One can recognise an ABC transmembrane type-1 1 domain in the interval Phe-320–Gln-595. Residues Val-629–Ala-852 form the ABC transporter 1 domain. Gly-664 to Ser-671 contacts ATP. A disordered region spans residues Leu-889–Arg-925. Residues Lys-906–Arg-918 show a composition bias toward basic residues. Transmembrane regions (helical) follow at residues Gly-945 to Ser-965, Ser-985 to Met-1005, Ile-1060 to Ser-1082, Trp-1086 to Ala-1108, Leu-1154 to Leu-1174, and Leu-1179 to Ile-1199. Residues Leu-950–Arg-1220 enclose the ABC transmembrane type-1 2 domain. The 235-residue stretch at Ile-1267–Ser-1501 folds into the ABC transporter 2 domain. Gly-1301–Ser-1308 serves as a coordination point for ATP.

Belongs to the ABC transporter superfamily. ABCC family. Conjugate transporter (TC 3.A.1.208) subfamily. As to expression, expressed in roots, leaves, stalks, tassels, silks, developing seeds and developing embryos.

Its subcellular location is the membrane. In terms of biological role, ABC transporter that may affect phytic acid transport and compartmentalization. May function directly or indirectly in removing phytic acid from the cytosol or in vesicle trafficking. Required for phytic acid accumulation in developing seeds. Phytic acid is the primary storage form of phosphorus in cereal grains and other plant seeds. The chain is ABC transporter C family MRP4 from Zea mays (Maize).